The chain runs to 603 residues: Trihelix transcription factor DF1 (603 aa).

The region spanning 60–118 is the Myb-like 1 domain; it reads NRWPRQETLALLKIRSDMGIAFRDASVKGPLWEEVSRKMAEHGYIRNAKKCKEKFENVY. 4 disordered regions span residues 149 to 201, 220 to 249, 333 to 408, and 532 to 603; these read QSTT…SSIP, LSDNSTSSSSSYSTSSDMEMGGGTATTRKK, KQPN…SSSR, and QWPP…TNNL. Composition is skewed to low complexity over residues 168-178, 189-198, 221-236, and 344-362; these read NNNNNNNNNNN, TTVMPTLPSS, SDNSTSSSSSYSTSSD, and PQQVRPSMQLNNNNQQQPP. The span at 363–376 shows a compositional bias: pro residues; it reads QRSPPPQPPAPLPQ. Residues 381 to 408 show a composition bias toward polar residues; it reads VVSTLDTTKTDNGGDQNMTPAASASSSR. The region spanning 401–465 is the Myb-like 2 domain; the sequence is AASASSSRWP…RCKEKWENIN (65 aa). The segment covering 532–555 has biased composition (low complexity); it reads QWPPAVTTATTTPAAAQPDQQSQP. A compositionally biased stretch (acidic residues) spans 559 to 586; it reads NFDDEEGTDEEYDDEDEEEENEEEEGGE. Residues 593–603 are compositionally biased toward low complexity; that stretch reads NNNNNKTTNNL.

The protein resides in the nucleus. In terms of biological role, transcription repressor that negatively regulates root hair growth by directly binding RSL4 promoter and repressing RSL4 expression. Required for the synthesis of seed coat mucilage. The protein is Trihelix transcription factor DF1 of Arabidopsis thaliana (Mouse-ear cress).